The following is a 347-amino-acid chain: Cell shape-determining protein MreB (347 aa).

ATP contacts are provided by residues 19-21 (TAN), 165-167 (GGT), 213-216 (ERIK), and 295-298 (GGAL).

This sequence belongs to the FtsA/MreB family. In terms of assembly, forms polymers in the presence of ATP. Forms pairs of protofilaments that adopt an antiparallel arrangement and bind to lipids.

It localises to the cytoplasm. Forms membrane-associated dynamic filaments that are essential for cell shape determination. Acts by regulating cell wall synthesis and cell elongation, and thus cell shape. A feedback loop between cell geometry and MreB localization may maintain elongated cell shape by targeting cell wall growth to regions of negative cell wall curvature. Required for mid-cell peptidoglycan synthesis and cell division. Directs the localization of the cytosolic peptidoglycan precursor-synthesizing enzyme MurG. Also required for proper chromosome segregation. Directs the segregation of origin-proximal but not origin-distal loci. This Caulobacter vibrioides (strain NA1000 / CB15N) (Caulobacter crescentus) protein is Cell shape-determining protein MreB.